A 485-amino-acid chain; its full sequence is Glutamate--tRNA ligase (485 aa).

Positions 11 to 21 (PSPTGYMHVGN) match the 'HIGH' region motif. Positions 108, 110, 135, and 137 each coordinate Zn(2+). Positions 252 to 256 (KLSKR) match the 'KMSKS' region motif. Position 255 (Lys255) interacts with ATP.

This sequence belongs to the class-I aminoacyl-tRNA synthetase family. Glutamate--tRNA ligase type 1 subfamily. Monomer. Requires Zn(2+) as cofactor.

It localises to the cytoplasm. It catalyses the reaction tRNA(Glu) + L-glutamate + ATP = L-glutamyl-tRNA(Glu) + AMP + diphosphate. Functionally, catalyzes the attachment of glutamate to tRNA(Glu) in a two-step reaction: glutamate is first activated by ATP to form Glu-AMP and then transferred to the acceptor end of tRNA(Glu). This is Glutamate--tRNA ligase from Clostridium botulinum (strain Okra / Type B1).